A 441-amino-acid polypeptide reads, in one-letter code: UDP-N-acetylmuramoylalanine--D-glutamate ligase (441 aa).

Residue 129–135 participates in ATP binding; sequence GTNGKST.

This sequence belongs to the MurCDEF family.

It is found in the cytoplasm. It carries out the reaction UDP-N-acetyl-alpha-D-muramoyl-L-alanine + D-glutamate + ATP = UDP-N-acetyl-alpha-D-muramoyl-L-alanyl-D-glutamate + ADP + phosphate + H(+). It participates in cell wall biogenesis; peptidoglycan biosynthesis. Functionally, cell wall formation. Catalyzes the addition of glutamate to the nucleotide precursor UDP-N-acetylmuramoyl-L-alanine (UMA). This Zymomonas mobilis subsp. mobilis (strain ATCC 31821 / ZM4 / CP4) protein is UDP-N-acetylmuramoylalanine--D-glutamate ligase.